The chain runs to 229 residues: Probable septum site-determining protein MinC (229 aa).

It belongs to the MinC family. In terms of assembly, interacts with MinD and FtsZ.

Its function is as follows. Cell division inhibitor that blocks the formation of polar Z ring septums. Rapidly oscillates between the poles of the cell to destabilize FtsZ filaments that have formed before they mature into polar Z rings. Prevents FtsZ polymerization. In Ruminiclostridium cellulolyticum (strain ATCC 35319 / DSM 5812 / JCM 6584 / H10) (Clostridium cellulolyticum), this protein is Probable septum site-determining protein MinC.